Reading from the N-terminus, the 507-residue chain is (6-4) photolyase (507 aa).

6,7-dimethyl-8-(1-D-ribityl)lumazine-binding positions include 9 to 10, 32 to 40, and Gly105; these read GD and CEVMAEASY. FAD is bound by residues 265–269 and Asn273; that span reads HSLLS. [4Fe-4S] cluster is bound at residue Cys350. Residues 363–366, Asp397, and Asn406 each bind FAD; that span reads YAHH. [4Fe-4S] cluster is bound by residues Cys438, Cys441, and Cys454.

Belongs to the iron-sulfur bacterial cryptochrome/photolyase (FeS-BCP) family. The cofactor is FAD. 6,7-dimethyl-8-(1-D-ribityl)lumazine is required as a cofactor. Requires [4Fe-4S] cluster as cofactor.

The catalysed reaction is (6-4) photoproduct (in DNA) = 2 pyrimidine residues (in DNA).. In terms of biological role, photolyase involved in the repair of UV-induced (6-4) lesions in DNA. Catalyzes the photoreactivation of (6-4) pyrimidine-pyrimidone photoproducts by using blue-light energy. Can repair (6-4) photoproducts in ssDNA as well as in dsDNA. In Agrobacterium fabrum (strain C58 / ATCC 33970) (Agrobacterium tumefaciens (strain C58)), this protein is (6-4) photolyase.